Reading from the N-terminus, the 394-residue chain is MLEFEQGFNHLATLKVIGVGGGGNNAVNRMIDHGMNNVEFIAINTDGQALNLSKAESKIQIGEKLTRGLGAGANPEIGKKAAEESREQIEDAIQGADMVFVTAGMGGGTGTGAAPVVAKIAKEMGALTVGVVTRPFGFEGRKRQTQAAAGVESMKAAVDTLIVIPNDRLLDIVDKSTPMMEAFKEADNVLRQGVQGISDLIAVSGEVNLDFADVKTIMSNQGSALMGIGVSSGENRAVEAAKKAISSPLLETSIVGAQGVLMNITGGESLSLFEAQEAADIVQDAADEDVNMIFGTVINPELQDEIVVTVIATGFEDKPSSQGRKATSTGFGSSVNSSSNHQSGASAKEDSFSAHTSHSQSSESVSERSHTTKDDDIPSFIRNREERRSRRTRR.

GTP is bound by residues 21–25 (GGGNN), Arg29, 108–110 (GTG), Glu139, Arg143, Asn166, and Asp187. A disordered region spans residues 317-394 (DKPSSQGRKA…EERRSRRTRR (78 aa)). Composition is skewed to low complexity over residues 328–346 (STGF…SGAS) and 353–364 (SAHTSHSQSSES). Basic and acidic residues predominate over residues 365–388 (VSERSHTTKDDDIPSFIRNREERR).

The protein belongs to the FtsZ family. In terms of assembly, homodimer. Polymerizes to form a dynamic ring structure in a strictly GTP-dependent manner. Interacts directly with several other division proteins.

It localises to the cytoplasm. Its function is as follows. Essential cell division protein that forms a contractile ring structure (Z ring) at the future cell division site. The regulation of the ring assembly controls the timing and the location of cell division. One of the functions of the FtsZ ring is to recruit other cell division proteins to the septum to produce a new cell wall between the dividing cells. Binds GTP and shows GTPase activity. The chain is Cell division protein FtsZ from Staphylococcus epidermidis (strain ATCC 35984 / DSM 28319 / BCRC 17069 / CCUG 31568 / BM 3577 / RP62A).